Reading from the N-terminus, the 160-residue chain is Cytochrome c-type biogenesis protein CcmE (160 aa).

The Cytoplasmic portion of the chain corresponds to 1–7 (MTRKQRR). The helical; Signal-anchor for type II membrane protein transmembrane segment at 8-28 (ATFIAVSLGILALAVGLVLYA) threads the bilayer. At 29 to 160 (MRDSIVYFYS…SETYGQGSYP (132 aa)) the chain is on the periplasmic side. Residues His-122 and Tyr-126 each contribute to the heme site. The tract at residues 141–160 (WQGEGAEAPHSETYGQGSYP) is disordered.

The protein belongs to the CcmE/CycJ family.

Its subcellular location is the cell inner membrane. Functionally, heme chaperone required for the biogenesis of c-type cytochromes. Transiently binds heme delivered by CcmC and transfers the heme to apo-cytochromes in a process facilitated by CcmF and CcmH. The protein is Cytochrome c-type biogenesis protein CcmE of Parvibaculum lavamentivorans (strain DS-1 / DSM 13023 / NCIMB 13966).